Reading from the N-terminus, the 52-residue chain is DNA import protein CedA2 (52 aa).

A run of 2 helical transmembrane segments spans residues 1 to 21 (MKSY…VYIY) and 27 to 47 (ILVS…IIFE).

As to quaternary structure, forms a complex composed of CedA, CedA1 and CedA2.

It is found in the cell membrane. Part of the Ced system, which is involved in DNA import. This chain is DNA import protein CedA2, found in Sulfolobus acidocaldarius (strain ATCC 33909 / DSM 639 / JCM 8929 / NBRC 15157 / NCIMB 11770).